We begin with the raw amino-acid sequence, 326 residues long: AA10 family lytic polysaccharide monooxygenase C (326 aa).

An N-terminal signal peptide occupies residues 1 to 32; it reads MVFSNSNASVSLFRLVALVATLSHLVFTFVDA. His-33 and His-118 together coordinate Cu(2+). In terms of domain architecture, Chitin-binding type-4 spans 33–200; sequence HGYVTFPASR…ANAFYQCLDL (168 aa). Cys-81 and Cys-197 form a disulfide bridge. N-linked (GlcNAc...) asparagine glycans are attached at residues Asn-206, Asn-215, Asn-266, and Asn-303. A disordered region spans residues 206-326; the sequence is NSSSSSSSSN…KSQMRRDRQG (121 aa). The span at 207 to 281 shows a compositional bias: low complexity; it reads SSSSSSSSNS…NNGGSSGSTT (75 aa).

This sequence belongs to the polysaccharide monooxygenase AA10 family. It depends on Cu(2+) as a cofactor.

Its subcellular location is the secreted. In terms of biological role, lytic polysaccharide monooxygenase (LPMO) that oxidatively cleaves alpha- and beta-chitin with C1 regioselectivity. Catalysis by LPMOs requires the reduction of the active-site copper from Cu(II) to Cu(I) by a reducing agent and H(2)O(2) or O(2) as a cosubstrate. Exhibits enzymatic activity on U.maydis fungal cell wall chitin and Boosts chitin hydrolysis by chitinase GH18A. This chain is AA10 family lytic polysaccharide monooxygenase C, found in Mycosarcoma maydis (Corn smut fungus).